Consider the following 149-residue polypeptide: Large ribosomal subunit protein bL9 (149 aa).

Belongs to the bacterial ribosomal protein bL9 family.

Functionally, binds to the 23S rRNA. In Haemophilus influenzae (strain PittGG), this protein is Large ribosomal subunit protein bL9.